The primary structure comprises 233 residues: Large ribosomal subunit protein uL1 (233 aa).

It belongs to the universal ribosomal protein uL1 family. As to quaternary structure, part of the 50S ribosomal subunit.

Functionally, binds directly to 23S rRNA. The L1 stalk is quite mobile in the ribosome, and is involved in E site tRNA release. In terms of biological role, protein L1 is also a translational repressor protein, it controls the translation of the L11 operon by binding to its mRNA. This Shewanella amazonensis (strain ATCC BAA-1098 / SB2B) protein is Large ribosomal subunit protein uL1.